The primary structure comprises 269 residues: uncharacterized protein (269 aa).

Over residues 1–16 the composition is skewed to pro residues; it reads MTDVPSKPPQTTPPPK. Disordered stretches follow at residues 1 to 110 and 157 to 269; these read MTDV…TISG and ILQQ…PTIQ. A compositionally biased stretch (polar residues) spans 21-45; sequence APTTIFSSPPQLPDRSSLNISHTAS. The span at 46–58 shows a compositional bias: low complexity; the sequence is TPTLTPTPLQQQQ. Residues 80-93 are compositionally biased toward polar residues; sequence SFSNSPNRQTQSFI. Positions 159–181 are enriched in low complexity; it reads QQPQQSHSPQQQQQQHTPNHQQP. The span at 182-195 shows a compositional bias: polar residues; it reads LSPQQQKDLAQKRS. Pro residues predominate over residues 198–213; that stretch reads PLPPRPNKNRPLPTPI.

This is an uncharacterized protein from Dictyostelium discoideum (Social amoeba).